The following is a 753-amino-acid chain: LIM domain and actin-binding protein 1 (753 aa).

An N-acetylmethionine modification is found at Met1. The residue at position 15 (Ser15) is a Phosphoserine. A compositionally biased stretch (basic and acidic residues) spans 46–56 (EEANMERKKNN). 2 disordered regions span residues 46 to 66 (EEAN…HFRR) and 82 to 186 (GAEF…TSGK). Ser132 is subject to Phosphoserine. Basic and acidic residues predominate over residues 143-152 (PRSENSHDFK). The Required for interaction with NPC1L1 signature appears at 164–166 (CLG). The segment covering 167–177 (DSRHEAEKPET) has biased composition (basic and acidic residues). Phosphoserine occurs at positions 225, 230, 242, and 263. Disordered stretches follow at residues 276–326 (AAVS…VSTT) and 341–379 (TCNS…TAKK). The segment covering 278–291 (VSKQSSPASYTNEL) has biased composition (polar residues). Positions 292–305 (KTSESKTHKWEQKE) are enriched in basic and acidic residues. Residues 342-351 (CNSQVKSEAQ) are compositionally biased toward polar residues. Ser348, Ser360, Ser367, and Ser372 each carry phosphoserine. A compositionally biased stretch (polar residues) spans 363–375 (ARTSSLPESSPSK). Residues 386-446 (ESCVECQKTV…KPHFNQLFKS (61 aa)) enclose the LIM zinc-binding domain. Residue Lys437 is modified to N6-succinyllysine. Ser467, Ser485, and Ser488 each carry phosphoserine. 3 disordered regions span residues 467–493 (SDNE…GVED), 505–669 (SMEA…FELE), and 682–703 (EDDN…GWSG). The interval 491-511 (VEDAPIAKVGVLAASMEAKAS) is required for interaction with MYO5B. 2 stretches are compositionally biased toward basic and acidic residues: residues 512-525 (SQRE…ETKK) and 554-565 (WPPEDDVCKTEA). Residues 598–609 (SSIKSPKASSPS) are compositionally biased toward low complexity. Phosphoserine is present on residues Ser599, Ser602, Ser607, and Ser615. Residues 630-666 (MERKQTENARPSGEKENVGKSRWQGEEVPRSKDRSSF) show a composition bias toward basic and acidic residues. Ser692, Ser720, and Ser735 each carry phosphoserine.

As to quaternary structure, interacts with NPC1L1; bridges NPC1L1 with MYO5B. Interacts with MYO5B; bridges MYO5B with NPC1L1. Interacts with PXN; this complex stabilizes actin dynamics. Binds to G-actin and F-actin. Interacts with LUZP1 (via C-terminus); both proteins restrict ciliation and may work together to regulate this process. Binds RAB40B (GTP-bound); interaction influences LIMA1 subcellular localization in lamellipodia during cell migration. Post-translationally, phosphorylation of the C-terminal region by MAPK1/MAPK3 reduces its association with F-actin and contributes to actin filament reorganization and enhances cell motility. In terms of processing, ubiquitinated by the ECS(RAB40B) complex leading to its degradation. In terms of tissue distribution, highly expressed in the small intestine, including the duodenum, jejunum, and ileum. Low expression in the liver and very low expressed in the heart, spleen, lung, brain, and pancreas. Isoform Alpha is highly expressed in embryos from day 7-11 and in adult spleen and lung. Isoform Beta expression is highest in adult kidney, testis, lung and liver, intermediate in heart, brain, spleen, skeletal muscle and low in embryos.

Its subcellular location is the cytoplasm. The protein localises to the cell junction. It is found in the focal adhesion. The protein resides in the cytoskeleton. It localises to the stress fiber. Its subcellular location is the cell membrane. The protein localises to the cell projection. It is found in the ruffle. The protein resides in the lamellipodium. Actin-binding protein involved in actin cytoskeleton regulation and dynamics. Increases the number and size of actin stress fibers and inhibits membrane ruffling. Inhibits actin filament depolymerization. Bundles actin filaments, delays filament nucleation and reduces formation of branched filaments. Acts as a negative regulator of primary cilium formation. Plays a role in cholesterol homeostasis. Influences plasma cholesterol levels through regulation of intestinal cholesterol absorption. May act as a scaffold protein by regulating NPC1L1 transportation, an essential protein for cholesterol absorption, to the plasma membrane by recruiting MYO5B to NPC1L1, and thus facilitates cholesterol uptake. This chain is LIM domain and actin-binding protein 1 (Lima1), found in Mus musculus (Mouse).